The primary structure comprises 404 residues: Phosphopentomutase (404 aa).

Mn(2+)-binding residues include D10, D303, H308, D344, H345, and H356.

Belongs to the phosphopentomutase family. Mn(2+) is required as a cofactor.

The protein resides in the cytoplasm. It carries out the reaction 2-deoxy-alpha-D-ribose 1-phosphate = 2-deoxy-D-ribose 5-phosphate. The enzyme catalyses alpha-D-ribose 1-phosphate = D-ribose 5-phosphate. It participates in carbohydrate degradation; 2-deoxy-D-ribose 1-phosphate degradation; D-glyceraldehyde 3-phosphate and acetaldehyde from 2-deoxy-alpha-D-ribose 1-phosphate: step 1/2. Its function is as follows. Isomerase that catalyzes the conversion of deoxy-ribose 1-phosphate (dRib-1-P) and ribose 1-phosphate (Rib-1-P) to deoxy-ribose 5-phosphate (dRib-5-P) and ribose 5-phosphate (Rib-5-P), respectively. The protein is Phosphopentomutase of Shewanella sp. (strain ANA-3).